A 706-amino-acid polypeptide reads, in one-letter code: Elongation factor G 1 (706 aa).

The tr-type G domain occupies 8–290; that stretch reads NRYRNIGICA…AVIDYLPAPT (283 aa). GTP is bound by residues 17-24, 88-92, and 142-145; these read AHVDAGKT, DTPGH, and NKMD.

This sequence belongs to the TRAFAC class translation factor GTPase superfamily. Classic translation factor GTPase family. EF-G/EF-2 subfamily.

Its subcellular location is the cytoplasm. Catalyzes the GTP-dependent ribosomal translocation step during translation elongation. During this step, the ribosome changes from the pre-translocational (PRE) to the post-translocational (POST) state as the newly formed A-site-bound peptidyl-tRNA and P-site-bound deacylated tRNA move to the P and E sites, respectively. Catalyzes the coordinated movement of the two tRNA molecules, the mRNA and conformational changes in the ribosome. The polypeptide is Elongation factor G 1 (Pseudomonas aeruginosa (strain ATCC 15692 / DSM 22644 / CIP 104116 / JCM 14847 / LMG 12228 / 1C / PRS 101 / PAO1)).